The following is a 391-amino-acid chain: 5-amino-6-(D-ribitylamino)uracil--L-tyrosine 4-hydroxyphenyl transferase (391 aa).

Positions 55-302 (VTYVINRNIN…GAVARIYLGN (248 aa)) constitute a Radical SAM core domain. Residues Cys69, Cys73, and Cys76 each coordinate [4Fe-4S] cluster.

It belongs to the radical SAM superfamily. CofH family. As to quaternary structure, consists of two subunits, CofG and CofH. [4Fe-4S] cluster is required as a cofactor.

The catalysed reaction is 5-amino-6-(D-ribitylamino)uracil + L-tyrosine + S-adenosyl-L-methionine = 5-amino-5-(4-hydroxybenzyl)-6-(D-ribitylimino)-5,6-dihydrouracil + 2-iminoacetate + 5'-deoxyadenosine + L-methionine + H(+). The protein operates within cofactor biosynthesis; coenzyme F0 biosynthesis. Functionally, catalyzes the radical-mediated synthesis of 5-amino-5-(4-hydroxybenzyl)-6-(D-ribitylimino)-5,6-dihydrouracil from 5-amino-6-(D-ribitylamino)uracil and L-tyrosine. The sequence is that of 5-amino-6-(D-ribitylamino)uracil--L-tyrosine 4-hydroxyphenyl transferase from Nostoc sp. (strain PCC 7120 / SAG 25.82 / UTEX 2576).